Reading from the N-terminus, the 411-residue chain is Intracellular hyaluronan-binding protein 4 (411 aa).

Serine 7 and serine 36 each carry phosphoserine. Positions 42-62 form a coiled coil; that stretch reads LREAEHRRQQQLQRKRRDEAA. The tract at residues 42–271 is disordered; the sequence is LREAEHRRQQ…ECQGTLDEES (230 aa). Arginine 70 carries the post-translational modification Omega-N-methylarginine. At serine 74 the chain carries Phosphoserine. Over residues 87 to 97 the composition is skewed to basic and acidic residues; sequence GRRESQKERKS. Residue serine 108 is modified to Phosphoserine. Composition is skewed to basic and acidic residues over residues 138–181 and 205–229; these read VLER…DRPL and DSFDQRGKRDFERYSSNDKTNRMED. Residues lysine 212 and lysine 274 each participate in a glycyl lysine isopeptide (Lys-Gly) (interchain with G-Cter in SUMO1); alternate cross-link. Glycyl lysine isopeptide (Lys-Gly) (interchain with G-Cter in SUMO2); alternate cross-links involve residues lysine 212 and lysine 274. Residues 279–301 are a coiled coil; sequence EVEEENQVQEMTLDEWKNLQEQT. The span at 296-313 shows a compositional bias: basic and acidic residues; that stretch reads NLQEQTRPKPEFNIRKPE. The segment at 296 to 318 is disordered; sequence NLQEQTRPKPEFNIRKPESTVPS. Lysine 334 is covalently cross-linked (Glycyl lysine isopeptide (Lys-Gly) (interchain with G-Cter in SUMO1); alternate). Lysine 334 is covalently cross-linked (Glycyl lysine isopeptide (Lys-Gly) (interchain with G-Cter in SUMO2); alternate). Residues threonine 352 and threonine 373 each carry the phosphothreonine; by PKC modification. The interval 358–411 is disordered; the sequence is NFGNLPRPGRGARGSTRGGRGRMRRTENYGPRAEVVTQDVAPNPDDPEDFPALA. The span at 402–411 shows a compositional bias: acidic residues; it reads DDPEDFPALA.

It belongs to the SERBP1-HABP4 family. As to quaternary structure, associates with ribosomes; promoting ribosome stabilization. Interacts with EEF2/eEF2; promoting ribosome stabilization. Interacts with FMR1. Interacts with FXR1 and FXR2. Interacts with CHD3 (via C-terminus). Interacts (via C-terminus) with RACK1. Interacts with p53/TP53. Interacts (via N-terminus) with SRSF9; this interaction is direct. Interacts with SYNCRIP; this interaction is direct. Interacts with MEF2C (via N-terminus); this interaction decreases DNA-binding activity of MEF2C in myocardial cells in response to mechanical stress. Interacts with PRMT1 (via N-terminus). Interacts with SPIN1. Post-translationally, phosphorylated by phorbol 12-myristate 13-acetate (PMA)-activated PKC isoforms at Thr-352 and Thr-373. Methylated. Methylation is decreased by phorbol 12-myristate 13-acetate (PMA)-activated PKC, in vitro. As to expression, expressed in adult heart, brain, liver, kidney, testis, and in various embryonic tissues, but not in adult spleen, lung or skeletal muscle.

The protein resides in the nucleus. The protein localises to the cytoplasm. It is found in the stress granule. Its subcellular location is the sarcoplasm. It localises to the nuclear body. The protein resides in the nucleolus. The protein localises to the nucleus speckle. It is found in the cajal body. Its subcellular location is the gem. Its function is as follows. Ribosome-binding protein that promotes ribosome hibernation, a process during which ribosomes are stabilized in an inactive state and preserved from proteasomal degradation. Acts via its association with EEF2/eEF2 factor at the A-site of the ribosome, promoting ribosome stabilization in an inactive state compatible with storage. Plays a key role in ribosome hibernation in the mature oocyte by promoting ribosome stabilization. Ribosomes, which are produced in large quantities during oogenesis, are stored and translationally repressed in the oocyte and early embryo. Also binds RNA, regulating transcription and pre-mRNA splicing. Binds (via C-terminus) to poly(U) RNA. Seems to play a role in PML-nuclear bodies formation. Negatively regulates DNA-binding activity of the transcription factor MEF2C in myocardial cells in response to mechanical stress. In Mus musculus (Mouse), this protein is Intracellular hyaluronan-binding protein 4.